The sequence spans 546 residues: CTP synthase (546 aa).

An amidoligase domain region spans residues 1-266; it reads MTTNYIFVTG…DELVCKRFGI (266 aa). A CTP-binding site is contributed by serine 14. Serine 14 provides a ligand contact to UTP. ATP-binding positions include 15-20 and aspartate 72; that span reads SLGKGI. 2 residues coordinate Mg(2+): aspartate 72 and glutamate 140. CTP-binding positions include 147-149, 187-192, and lysine 223; these read DIE and KTKPTQ. Residues 187 to 192 and lysine 223 contribute to the UTP site; that span reads KTKPTQ. 239–241 contributes to the ATP binding site; that stretch reads RDV. Residues 291–542 form the Glutamine amidotransferase type-1 domain; sequence TIGMVGKYIE…VKAAGEFQRG (252 aa). Glycine 352 is an L-glutamine binding site. Residue cysteine 379 is the Nucleophile; for glutamine hydrolysis of the active site. Residues 380-383, glutamate 403, and arginine 470 contribute to the L-glutamine site; that span reads LGMQ. Residues histidine 515 and glutamate 517 contribute to the active site.

The protein belongs to the CTP synthase family. As to quaternary structure, homotetramer.

The catalysed reaction is UTP + L-glutamine + ATP + H2O = CTP + L-glutamate + ADP + phosphate + 2 H(+). The enzyme catalyses L-glutamine + H2O = L-glutamate + NH4(+). It carries out the reaction UTP + NH4(+) + ATP = CTP + ADP + phosphate + 2 H(+). It functions in the pathway pyrimidine metabolism; CTP biosynthesis via de novo pathway; CTP from UDP: step 2/2. Its activity is regulated as follows. Allosterically activated by GTP, when glutamine is the substrate; GTP has no effect on the reaction when ammonia is the substrate. The allosteric effector GTP functions by stabilizing the protein conformation that binds the tetrahedral intermediate(s) formed during glutamine hydrolysis. Inhibited by the product CTP, via allosteric rather than competitive inhibition. Functionally, catalyzes the ATP-dependent amination of UTP to CTP with either L-glutamine or ammonia as the source of nitrogen. Regulates intracellular CTP levels through interactions with the four ribonucleotide triphosphates. The chain is CTP synthase from Vibrio atlanticus (strain LGP32) (Vibrio splendidus (strain Mel32)).